Here is a 427-residue protein sequence, read N- to C-terminus: UPF0229 protein KPN78578_11640 (427 aa).

Residues 72 to 109 (RNRVHPGNDHFVQNDRIERPQGGGGGGGSGQGQASADG) form a disordered region. The span at 77–90 (PGNDHFVQNDRIER) shows a compositional bias: basic and acidic residues. Residues 92-102 (QGGGGGGGSGQ) show a composition bias toward gly residues.

Belongs to the UPF0229 family.

In Klebsiella pneumoniae subsp. pneumoniae (strain ATCC 700721 / MGH 78578), this protein is UPF0229 protein KPN78578_11640.